We begin with the raw amino-acid sequence, 447 residues long: Membrane metalloprotease ARASP, chloroplastic (447 aa).

Residues 1–73 (MLLNISSSPI…YPDGERFDFR (73 aa)) constitute a chloroplast transit peptide. His-102 lines the Zn(2+) pocket. Glu-103 is a catalytic residue. A Zn(2+)-binding site is contributed by His-106. A helical membrane pass occupies residues 177–197 (SIVVSAGIIANVIFAYAIIFV). A PDZ domain is found at 202 to 244 (VGLPVQEAFPGVLVPEVKTFSAASRDGLLSGDVILAVDGTELS). Helical transmembrane passes span 379-399 (LAVI…ALIL) and 413-433 (VEQG…LFLI).

Belongs to the peptidase M50A family. The cofactor is Zn(2+). In terms of tissue distribution, expressed in green seedlings and cotyledons. Low levels of expression in roots, siliques and seeds.

Its subcellular location is the plastid. It localises to the chloroplast inner membrane. Its function is as follows. Metalloprotease essential for chloroplast and plant development. May be involved in regulated intramembrane proteolysis (RIP). This Arabidopsis thaliana (Mouse-ear cress) protein is Membrane metalloprotease ARASP, chloroplastic.